A 396-amino-acid chain; its full sequence is RNA binding protein fox-1 homolog 1 (396 aa).

The segment at Met-1–His-119 is disordered. Positions Pro-67–Gly-86 are enriched in polar residues. The segment covering Thr-87–Asp-98 has biased composition (low complexity). Residues Gly-99–Lys-112 are compositionally biased toward polar residues. Positions Lys-116 to Ala-192 constitute an RRM domain. Asymmetric dimethylarginine occurs at positions 316 and 337. Arg-387 bears the Omega-N-methylarginine mark.

As to quaternary structure, binds to the C-terminus of ATXN2. As to expression, detected in brain (at protein level). Detected in heart, brain, neurons, skeletal muscle and embryo.

Its subcellular location is the nucleus. It localises to the cytoplasm. RNA-binding protein that regulates alternative splicing events by binding to 5'-UGCAUGU-3' elements. Prevents binding of U2AF2 to the 3'-splice site. Regulates alternative splicing of tissue-specific exons and of differentially spliced exons during erythropoiesis. In Mus musculus (Mouse), this protein is RNA binding protein fox-1 homolog 1 (Rbfox1).